The sequence spans 302 residues: 4-hydroxy-tetrahydrodipicolinate synthase (302 aa).

Pyruvate is bound at residue T55. Y144 (proton donor/acceptor) is an active-site residue. K172 serves as the catalytic Schiff-base intermediate with substrate. V214 contributes to the pyruvate binding site.

The protein belongs to the DapA family. In terms of assembly, homotetramer; dimer of dimers.

The protein localises to the cytoplasm. It catalyses the reaction L-aspartate 4-semialdehyde + pyruvate = (2S,4S)-4-hydroxy-2,3,4,5-tetrahydrodipicolinate + H2O + H(+). The protein operates within amino-acid biosynthesis; L-lysine biosynthesis via DAP pathway; (S)-tetrahydrodipicolinate from L-aspartate: step 3/4. In terms of biological role, catalyzes the condensation of (S)-aspartate-beta-semialdehyde [(S)-ASA] and pyruvate to 4-hydroxy-tetrahydrodipicolinate (HTPA). The protein is 4-hydroxy-tetrahydrodipicolinate synthase of Synechococcus sp. (strain CC9605).